We begin with the raw amino-acid sequence, 334 residues long: tRNA-dihydrouridine(20/20a) synthase (334 aa).

FMN is bound by residues 18–20 and Gln71; that span reads PMM. Cys101 (proton donor) is an active-site residue. FMN is bound by residues Lys140, His172, 212–214, and 234–235; these read NGG and GR.

The protein belongs to the Dus family. DusA subfamily. Requires FMN as cofactor.

The enzyme catalyses 5,6-dihydrouridine(20) in tRNA + NADP(+) = uridine(20) in tRNA + NADPH + H(+). The catalysed reaction is 5,6-dihydrouridine(20) in tRNA + NAD(+) = uridine(20) in tRNA + NADH + H(+). It carries out the reaction 5,6-dihydrouridine(20a) in tRNA + NADP(+) = uridine(20a) in tRNA + NADPH + H(+). It catalyses the reaction 5,6-dihydrouridine(20a) in tRNA + NAD(+) = uridine(20a) in tRNA + NADH + H(+). Its function is as follows. Catalyzes the synthesis of 5,6-dihydrouridine (D), a modified base found in the D-loop of most tRNAs, via the reduction of the C5-C6 double bond in target uridines. Specifically modifies U20 and U20a in tRNAs. The protein is tRNA-dihydrouridine(20/20a) synthase of Xanthomonas axonopodis pv. citri (strain 306).